Consider the following 195-residue polypeptide: ATP-dependent Clp protease proteolytic subunit 3 (195 aa).

The Nucleophile role is filled by Ser97. Residue His122 is part of the active site.

Belongs to the peptidase S14 family. In terms of assembly, fourteen ClpP subunits assemble into 2 heptameric rings which stack back to back to give a disk-like structure with a central cavity, resembling the structure of eukaryotic proteasomes.

The protein localises to the cytoplasm. It carries out the reaction Hydrolysis of proteins to small peptides in the presence of ATP and magnesium. alpha-casein is the usual test substrate. In the absence of ATP, only oligopeptides shorter than five residues are hydrolyzed (such as succinyl-Leu-Tyr-|-NHMec, and Leu-Tyr-Leu-|-Tyr-Trp, in which cleavage of the -Tyr-|-Leu- and -Tyr-|-Trp bonds also occurs).. In terms of biological role, cleaves peptides in various proteins in a process that requires ATP hydrolysis. Has a chymotrypsin-like activity. Plays a major role in the degradation of misfolded proteins. This is ATP-dependent Clp protease proteolytic subunit 3 from Rhizobium meliloti (strain 1021) (Ensifer meliloti).